The sequence spans 215 residues: 3-isopropylmalate dehydratase small subunit (215 aa).

Belongs to the LeuD family. LeuD type 1 subfamily. In terms of assembly, heterodimer of LeuC and LeuD.

It catalyses the reaction (2R,3S)-3-isopropylmalate = (2S)-2-isopropylmalate. It participates in amino-acid biosynthesis; L-leucine biosynthesis; L-leucine from 3-methyl-2-oxobutanoate: step 2/4. In terms of biological role, catalyzes the isomerization between 2-isopropylmalate and 3-isopropylmalate, via the formation of 2-isopropylmaleate. This is 3-isopropylmalate dehydratase small subunit from Chromohalobacter salexigens (strain ATCC BAA-138 / DSM 3043 / CIP 106854 / NCIMB 13768 / 1H11).